Consider the following 370-residue polypeptide: MKIVVDENIPLADALFGDLGEIIRKPGREISSADVAEADALLVRSVTRVNADLLTGSKVKFVGTCTIGTDHLDKEFLAEAGIRFASAPGCNAQGVVQYDLAALAHLGYLARDIRVGIIGCGNVGGSLHRALTGMGVTCVCYDPFLTQDQNADLADWDALFTCDVICVHTPLTRSGPYPTHHMLSTPFFRAMRDGALLLNAGRGEVIDNRALKAYLQGDNSNHLSVVLDVWEGEPAIDAELAPLVKIATPHIAGYSFEGKTNGSLMIYEALAEFLGVNATERSARVAAVKAQAYGAAEPLDADDLVTAILATHPITRDDKALRDQLDQLPAGFDALRKGYPVRREFSHYQLTSAQIPANVTALGFSLDSAK.

Substrate is bound by residues S45 and T66. NAD(+)-binding residues include D142 and T169. R202 is an active-site residue. D228 lines the NAD(+) pocket. E233 is a catalytic residue. The active-site Proton donor is the H250. Residue G253 participates in NAD(+) binding. Substrate is bound at residue Y254.

Belongs to the D-isomer specific 2-hydroxyacid dehydrogenase family. PdxB subfamily. As to quaternary structure, homodimer.

It localises to the cytoplasm. It carries out the reaction 4-phospho-D-erythronate + NAD(+) = (R)-3-hydroxy-2-oxo-4-phosphooxybutanoate + NADH + H(+). It functions in the pathway cofactor biosynthesis; pyridoxine 5'-phosphate biosynthesis; pyridoxine 5'-phosphate from D-erythrose 4-phosphate: step 2/5. Functionally, catalyzes the oxidation of erythronate-4-phosphate to 3-hydroxy-2-oxo-4-phosphonooxybutanoate. The chain is Erythronate-4-phosphate dehydrogenase from Teredinibacter turnerae (strain ATCC 39867 / T7901).